Consider the following 156-residue polypeptide: Ribosomal RNA large subunit methyltransferase H (156 aa).

S-adenosyl-L-methionine-binding positions include Leu73, Gly104, and 123–128 (ISSMTL).

This sequence belongs to the RNA methyltransferase RlmH family. As to quaternary structure, homodimer.

Its subcellular location is the cytoplasm. The catalysed reaction is pseudouridine(1915) in 23S rRNA + S-adenosyl-L-methionine = N(3)-methylpseudouridine(1915) in 23S rRNA + S-adenosyl-L-homocysteine + H(+). In terms of biological role, specifically methylates the pseudouridine at position 1915 (m3Psi1915) in 23S rRNA. The protein is Ribosomal RNA large subunit methyltransferase H of Burkholderia cenocepacia (strain ATCC BAA-245 / DSM 16553 / LMG 16656 / NCTC 13227 / J2315 / CF5610) (Burkholderia cepacia (strain J2315)).